We begin with the raw amino-acid sequence, 162 residues long: 2-C-methyl-D-erythritol 2,4-cyclodiphosphate synthase (162 aa).

A divalent metal cation contacts are provided by Asp-12 and His-14. Residues 12 to 14 (DVH) and 38 to 39 (HS) contribute to the 4-CDP-2-C-methyl-D-erythritol 2-phosphate site. His-46 lines the a divalent metal cation pocket. Residues 60 to 62 (DIG), 136 to 139 (TTTE), Phe-143, and Arg-146 contribute to the 4-CDP-2-C-methyl-D-erythritol 2-phosphate site.

This sequence belongs to the IspF family. Homotrimer. It depends on a divalent metal cation as a cofactor.

The enzyme catalyses 4-CDP-2-C-methyl-D-erythritol 2-phosphate = 2-C-methyl-D-erythritol 2,4-cyclic diphosphate + CMP. The protein operates within isoprenoid biosynthesis; isopentenyl diphosphate biosynthesis via DXP pathway; isopentenyl diphosphate from 1-deoxy-D-xylulose 5-phosphate: step 4/6. In terms of biological role, involved in the biosynthesis of isopentenyl diphosphate (IPP) and dimethylallyl diphosphate (DMAPP), two major building blocks of isoprenoid compounds. Catalyzes the conversion of 4-diphosphocytidyl-2-C-methyl-D-erythritol 2-phosphate (CDP-ME2P) to 2-C-methyl-D-erythritol 2,4-cyclodiphosphate (ME-CPP) with a corresponding release of cytidine 5-monophosphate (CMP). The sequence is that of 2-C-methyl-D-erythritol 2,4-cyclodiphosphate synthase from Porphyromonas gingivalis (strain ATCC 33277 / DSM 20709 / CIP 103683 / JCM 12257 / NCTC 11834 / 2561).